The following is a 271-amino-acid chain: MVGALCGCWFRLGGARPLIPLGPTVVQTSMSRSQVALLGLSLLLMLLLYVGLPGPPEQTSCLWGDPNVTVLAGLTPGNSPIFYREVLPLNQAHRVEVVLLHGKAFNSHTWEQLGTLQLLSQRGYRAVALDLPGFGNSAPSKEASTEAGRAALLERALRDLEVQNAVLVSPSLSGHYALPFLMRGHHQLHGFVPIAPTSTQNYTQEQFWAVKTPTLILYGELDHILARESLRQLRHLPNHSVVKLRNAGHACYLHKPQDFHLVLLAFLDHLP.

The chain crosses the membrane as a helical; Signal-anchor for type II membrane protein span at residues 35 to 55; it reads VALLGLSLLLMLLLYVGLPGP. Asn67 is a glycosylation site (N-linked (GlcNAc...) asparagine). Catalysis depends on Ser171, which acts as the Charge relay system. Asn201 carries an N-linked (GlcNAc...) asparagine glycan. Active-site charge relay system residues include Asp222 and His249.

The protein belongs to the AB hydrolase superfamily. ABHD14 family.

The protein localises to the cytoplasm. It localises to the membrane. Functionally, possible role in granule neuron development. This Homo sapiens (Human) protein is Protein ABHD14A.